The sequence spans 403 residues: Flavohemoprotein (403 aa).

The region spanning M1–S138 is the Globin domain. Position 85 (H85) interacts with heme b. Residues Y95 and E137 each act as charge relay system in the active site. Residues G149–E403 form a reductase region. The FAD-binding FR-type domain maps to A152–D262. FAD-binding positions include Y190 and R206–S209. Residue G275–P280 participates in NADP(+) binding. FAD is bound at residue V395–P398.

The protein belongs to the globin family. Two-domain flavohemoproteins subfamily. It in the C-terminal section; belongs to the flavoprotein pyridine nucleotide cytochrome reductase family. Heme b serves as cofactor. Requires FAD as cofactor.

It carries out the reaction 2 nitric oxide + NADPH + 2 O2 = 2 nitrate + NADP(+) + H(+). The enzyme catalyses 2 nitric oxide + NADH + 2 O2 = 2 nitrate + NAD(+) + H(+). Functionally, is involved in NO detoxification in an aerobic process, termed nitric oxide dioxygenase (NOD) reaction that utilizes O(2) and NAD(P)H to convert NO to nitrate, which protects the bacterium from various noxious nitrogen compounds. Therefore, plays a central role in the inducible response to nitrosative stress. In Rhizobium meliloti (strain 1021) (Ensifer meliloti), this protein is Flavohemoprotein.